A 1385-amino-acid chain; its full sequence is Kinesin-like protein KIF15 (1385 aa).

The interval 1–24 is disordered; sequence MAPGCKSELRNVTNSHSNQPSNED. Positions 10 to 21 are enriched in polar residues; the sequence is RNVTNSHSNQPS. The Kinesin motor domain maps to 26 to 363; it reads AIKVFVRIRP…LNFAQRAKLI (338 aa). 109 to 116 contacts ATP; that stretch reads GQTGSGKT. A coiled-coil region spans residues 368–1385; sequence VVNEDTQGNV…NVFLKERKKE (1018 aa). Lys-1007 carries the N6-acetyllysine modification. 2 positions are modified to phosphoserine: Ser-1139 and Ser-1167. Residues 1222 to 1243 are disordered; it reads DMKRQGESSSQSRPDSQQLKNE. Over residues 1228 to 1241 the composition is skewed to polar residues; it reads ESSSQSRPDSQQLK.

The protein belongs to the TRAFAC class myosin-kinesin ATPase superfamily. Kinesin family. KLP2 subfamily. In terms of assembly, interacts with MKI67 and TPX2. In terms of tissue distribution, expressed in sympathetic neurons.

It localises to the cytoplasm. Its subcellular location is the cytoskeleton. The protein resides in the spindle. Its function is as follows. Plus-end directed kinesin-like motor enzyme involved in mitotic spindle assembly. This is Kinesin-like protein KIF15 (Kif15) from Rattus norvegicus (Rat).